Consider the following 807-residue polypeptide: Leucine--tRNA ligase (807 aa).

Residues 40-51 carry the 'HIGH' region motif; that stretch reads PYPSGSGLHVGH. Positions 576–580 match the 'KMSKS' region motif; it reads KMSKS. Residue K579 participates in ATP binding.

The protein belongs to the class-I aminoacyl-tRNA synthetase family.

It localises to the cytoplasm. The catalysed reaction is tRNA(Leu) + L-leucine + ATP = L-leucyl-tRNA(Leu) + AMP + diphosphate. The sequence is that of Leucine--tRNA ligase from Chlorobaculum tepidum (strain ATCC 49652 / DSM 12025 / NBRC 103806 / TLS) (Chlorobium tepidum).